The sequence spans 84 residues: Exodeoxyribonuclease 7 small subunit (84 aa).

Belongs to the XseB family. Heterooligomer composed of large and small subunits.

It is found in the cytoplasm. It catalyses the reaction Exonucleolytic cleavage in either 5'- to 3'- or 3'- to 5'-direction to yield nucleoside 5'-phosphates.. In terms of biological role, bidirectionally degrades single-stranded DNA into large acid-insoluble oligonucleotides, which are then degraded further into small acid-soluble oligonucleotides. This Bartonella henselae (strain ATCC 49882 / DSM 28221 / CCUG 30454 / Houston 1) (Rochalimaea henselae) protein is Exodeoxyribonuclease 7 small subunit.